The sequence spans 292 residues: Homoserine kinase (292 aa).

84 to 94 contacts ATP; that stretch reads PLARGMGSSSA.

The protein belongs to the GHMP kinase family. Homoserine kinase subfamily.

The protein localises to the cytoplasm. It catalyses the reaction L-homoserine + ATP = O-phospho-L-homoserine + ADP + H(+). The protein operates within amino-acid biosynthesis; L-threonine biosynthesis; L-threonine from L-aspartate: step 4/5. Catalyzes the ATP-dependent phosphorylation of L-homoserine to L-homoserine phosphate. The polypeptide is Homoserine kinase (Thermus thermophilus (strain ATCC 27634 / DSM 579 / HB8)).